We begin with the raw amino-acid sequence, 772 residues long: U3 small nucleolar RNA-associated protein 25 homolog (772 aa).

The interval 1–179 (MGKRRNRGRS…SEEFTDVKHE (179 aa)) is disordered. Promotes p53/TP53 degradation regions lie at residues 1-201 (MGKR…SQRP) and 589-651 (VQLP…KKEE). At serine 10 the chain carries Phosphoserine. A compositionally biased stretch (basic and acidic residues) spans 25–43 (RDFGEEHPFYDRVSKKEAK). A phosphoserine mark is found at serine 52, serine 60, and serine 64. Residues 54–70 (DSSHSESESESEQEHVS) show a composition bias toward basic and acidic residues. Positions 84–124 (EEEEEEEEEEEEEEEEEEEEEEEEEDDSAVGDAEMNEEAGS) are enriched in acidic residues. Residues 127–136 (GSVGEAAVSE) show a composition bias toward low complexity. Over residues 169-179 (SSEEFTDVKHE) the composition is skewed to basic and acidic residues. Positions 652-713 (LNFTHICEYT…YELPTYPHFY (62 aa)) are represses p53/TP53 degradation.

This sequence belongs to the UTP25 family. As to quaternary structure, interacts with CAPN3; the interaction is required for CAPN3 translocation to the nucleolus. Post-translationally, phosphorylated. Phosphorylation is required to promote p53/TP53 degradation in the nucleolus which promotes cell cycle progression and liver development. Expressed in all tissues tested: brain, small intestine, large intestine, stomach, liver, spleen, thymus, lung, kidney and testes (at protein level).

Its subcellular location is the nucleus. The protein resides in the nucleolus. Its function is as follows. Component of the ribosomal small subunit processome for the biogenesis of ribosomes, functions in pre-ribosomal RNA (pre-rRNA) processing. Essential for embryonic development in part through the regulation of p53 pathway. Controls the expansion growth of digestive organs and liver. Also involved in the sympathetic neuronal development. Mediates, with CAPN3, the proteasome-independent degradation of p53/TP53. The sequence is that of U3 small nucleolar RNA-associated protein 25 homolog from Mus musculus (Mouse).